The primary structure comprises 1048 residues: B3 domain-containing protein Os02g0598200 (1048 aa).

Residues 1–345 (MDGAVRGQGC…QKERVASSDN (345 aa)) form a disordered region. The segment covering 16–25 (SFNKTKKKNR) has biased composition (basic residues). Composition is skewed to basic and acidic residues over residues 26 to 134 (NCSD…SDDM), 151 to 162 (KKNSRNDADEEK), 169 to 214 (CSDD…GDKK), 243 to 253 (KNMKSDGDSYK), 281 to 295 (AKER…MEMK), and 332 to 345 (LKRE…SSDN). A DNA-binding region (TF-B3 1) is located at residues 375–468 (AFAFFKFVRD…TFSVRVFGID (94 aa)). Residues 505–528 (QYQDSEDIHDGPNVSGESPRSKEP) form a disordered region. Residues 953–1048 (LQFCIPSTIQ…LAFQVYITRK (96 aa)) constitute a DNA-binding region (TF-B3 2).

It is found in the nucleus. This Oryza sativa subsp. japonica (Rice) protein is B3 domain-containing protein Os02g0598200.